We begin with the raw amino-acid sequence, 182 residues long: Gremlin-1 (182 aa).

Positions 1 to 24 are cleaved as a signal peptide; the sequence is MNCLVYALGSLFLLSGLLLPSSEG. The segment at 23–65 is disordered; the sequence is EGKKKVSGSQGAIPPPDKGQPNDSEQGQAQPGDRVRGKGKGQA. An N-linked (GlcNAc...) asparagine glycan is attached at N44. 4 disulfides stabilise this stretch: C92-C142, C106-C156, C116-C174, and C120-C176. In terms of domain architecture, CTCK spans 92–182; the sequence is CKTQPLKQTI…QCRCISIDLD (91 aa).

Belongs to the DAN family.

The protein resides in the secreted. In terms of biological role, cytokine that has an axial patterning activity. Acts like BMP antagonist in embryonic explants. Blocks the BMP2 activity. The protein is Gremlin-1 (grem1) of Xenopus laevis (African clawed frog).